The chain runs to 89 residues: Small ribosomal subunit protein uS15 (89 aa).

This sequence belongs to the universal ribosomal protein uS15 family. Part of the 30S ribosomal subunit. Forms a bridge to the 50S subunit in the 70S ribosome, contacting the 23S rRNA.

One of the primary rRNA binding proteins, it binds directly to 16S rRNA where it helps nucleate assembly of the platform of the 30S subunit by binding and bridging several RNA helices of the 16S rRNA. In terms of biological role, forms an intersubunit bridge (bridge B4) with the 23S rRNA of the 50S subunit in the ribosome. This Hahella chejuensis (strain KCTC 2396) protein is Small ribosomal subunit protein uS15.